We begin with the raw amino-acid sequence, 277 residues long: Large ribosomal subunit protein uL2 (277 aa).

Disordered stretches follow at residues 28 to 55 and 207 to 277; these read EPEK…RHRG and KAGR…RTQG. Composition is skewed to basic residues over residues 34-43, 209-220, and 255-265; these read THHKHSKQGR, GRTRHRGQRPHV, and LGRKTRNKKKR.

Belongs to the universal ribosomal protein uL2 family. In terms of assembly, part of the 50S ribosomal subunit. Forms a bridge to the 30S subunit in the 70S ribosome.

Its function is as follows. One of the primary rRNA binding proteins. Required for association of the 30S and 50S subunits to form the 70S ribosome, for tRNA binding and peptide bond formation. It has been suggested to have peptidyltransferase activity; this is somewhat controversial. Makes several contacts with the 16S rRNA in the 70S ribosome. This Microcystis aeruginosa (strain NIES-843 / IAM M-2473) protein is Large ribosomal subunit protein uL2.